Reading from the N-terminus, the 254-residue chain is Leucyl/phenylalanyl-tRNA--protein transferase (254 aa).

The protein belongs to the L/F-transferase family.

The protein resides in the cytoplasm. The enzyme catalyses N-terminal L-lysyl-[protein] + L-leucyl-tRNA(Leu) = N-terminal L-leucyl-L-lysyl-[protein] + tRNA(Leu) + H(+). It carries out the reaction N-terminal L-arginyl-[protein] + L-leucyl-tRNA(Leu) = N-terminal L-leucyl-L-arginyl-[protein] + tRNA(Leu) + H(+). The catalysed reaction is L-phenylalanyl-tRNA(Phe) + an N-terminal L-alpha-aminoacyl-[protein] = an N-terminal L-phenylalanyl-L-alpha-aminoacyl-[protein] + tRNA(Phe). Its function is as follows. Functions in the N-end rule pathway of protein degradation where it conjugates Leu, Phe and, less efficiently, Met from aminoacyl-tRNAs to the N-termini of proteins containing an N-terminal arginine or lysine. The chain is Leucyl/phenylalanyl-tRNA--protein transferase from Burkholderia multivorans (strain ATCC 17616 / 249).